The primary structure comprises 66 residues: Large ribosomal subunit protein bL33c (66 aa).

Belongs to the bacterial ribosomal protein bL33 family.

It localises to the plastid. It is found in the chloroplast. The chain is Large ribosomal subunit protein bL33c from Eucalyptus globulus subsp. globulus (Tasmanian blue gum).